The following is a 141-amino-acid chain: Hemoglobin subunit beta-C (141 aa).

One can recognise a Globin domain in the interval 1 to 141 (PNKALITGFW…VASALAHRYH (141 aa)). Heme b contacts are provided by His-58 and His-87.

This sequence belongs to the globin family. Heterotetramer of two alpha chains and two beta chains. Red blood cells.

Its function is as follows. Involved in oxygen transport from the lung to the various peripheral tissues. This chain is Hemoglobin subunit beta-C, found in Ammotragus lervia (Barbary sheep).